A 590-amino-acid chain; its full sequence is Pentatricopeptide repeat-containing protein At2g46050, mitochondrial (590 aa).

The N-terminal 109 residues, 1 to 109, are a transit peptide targeting the mitochondrion; sequence MRFTFLRSTR…RNIVTWNILI (109 aa). PPR repeat units follow at residues 141–175, 176–206, 207–241, 244–266, 275–305, 306–340, 341–375, 376–406, 407–437, 441–471, and 477–507; these read DHVS…GLES, SCFP…VLDR, DLVL…KNRF, DYFT…IHAI, DIPV…MVVR, NVVS…NLQP, DELT…GSAD, FLSV…IREP, DLVS…MLQK, DKIT…MTEF, and EDEH…MPTE. Residues 512–588 form a type E motif region; that stretch reads ALAAFTGGCN…TPGCSWLGDY (77 aa).

Belongs to the PPR family. PCMP-E subfamily.

It localises to the mitochondrion. In Arabidopsis thaliana (Mouse-ear cress), this protein is Pentatricopeptide repeat-containing protein At2g46050, mitochondrial (PCMP-E39).